Consider the following 80-residue polypeptide: Cytochrome c oxidase subunit 7B, mitochondrial (80 aa).

The transit peptide at 1 to 24 directs the protein to the mitochondrion; it reads MFPLAKNALSRLRVQSIQQAVARQ. The Mitochondrial matrix portion of the chain corresponds to 25–32; it reads IHQKRAPD. Residues 33-59 form a helical membrane-spanning segment; that stretch reads FHDKYGNAVLASGATFCVAVWVYMATQ. Residues 60–80 are Mitochondrial intermembrane-facing; the sequence is IGIEWNPSPVGRVTPKEWREQ.

Belongs to the cytochrome c oxidase VIIb family. As to quaternary structure, component of the cytochrome c oxidase (complex IV, CIV), a multisubunit enzyme composed of 14 subunits. The complex is composed of a catalytic core of 3 subunits MT-CO1, MT-CO2 and MT-CO3, encoded in the mitochondrial DNA, and 11 supernumerary subunits COX4I1 (or COX4I2), COX5A, COX5B, COX6A2 (or COX6A1), COX6B1 (or COX6B2), COX6C, COX7A1 (or COX7A2), COX7B, COX7C, COX8B and NDUFA4, which are encoded in the nuclear genome. The complex exists as a monomer or a dimer and forms supercomplexes (SCs) in the inner mitochondrial membrane with NADH-ubiquinone oxidoreductase (complex I, CI) and ubiquinol-cytochrome c oxidoreductase (cytochrome b-c1 complex, complex III, CIII), resulting in different assemblies (supercomplex SCI(1)III(2)IV(1) and megacomplex MCI(2)III(2)IV(2)).

The protein localises to the mitochondrion inner membrane. The protein operates within energy metabolism; oxidative phosphorylation. Its function is as follows. Component of the cytochrome c oxidase, the last enzyme in the mitochondrial electron transport chain which drives oxidative phosphorylation. The respiratory chain contains 3 multisubunit complexes succinate dehydrogenase (complex II, CII), ubiquinol-cytochrome c oxidoreductase (cytochrome b-c1 complex, complex III, CIII) and cytochrome c oxidase (complex IV, CIV), that cooperate to transfer electrons derived from NADH and succinate to molecular oxygen, creating an electrochemical gradient over the inner membrane that drives transmembrane transport and the ATP synthase. Cytochrome c oxidase is the component of the respiratory chain that catalyzes the reduction of oxygen to water. Electrons originating from reduced cytochrome c in the intermembrane space (IMS) are transferred via the dinuclear copper A center (CU(A)) of subunit 2 and heme A of subunit 1 to the active site in subunit 1, a binuclear center (BNC) formed by heme A3 and copper B (CU(B)). The BNC reduces molecular oxygen to 2 water molecules using 4 electrons from cytochrome c in the IMS and 4 protons from the mitochondrial matrix. Plays a role in proper central nervous system (CNS) development in vertebrates. The sequence is that of Cytochrome c oxidase subunit 7B, mitochondrial (COX7B) from Bos taurus (Bovine).